The following is a 606-amino-acid chain: 4-hydroxy-3-methylbut-2-en-1-yl diphosphate synthase (flavodoxin) (606 aa).

Cys-513, Cys-516, Cys-547, and Glu-554 together coordinate [4Fe-4S] cluster.

Belongs to the IspG family. It depends on [4Fe-4S] cluster as a cofactor.

It carries out the reaction (2E)-4-hydroxy-3-methylbut-2-enyl diphosphate + oxidized [flavodoxin] + H2O + 2 H(+) = 2-C-methyl-D-erythritol 2,4-cyclic diphosphate + reduced [flavodoxin]. It functions in the pathway isoprenoid biosynthesis; isopentenyl diphosphate biosynthesis via DXP pathway; isopentenyl diphosphate from 1-deoxy-D-xylulose 5-phosphate: step 5/6. In terms of biological role, converts 2C-methyl-D-erythritol 2,4-cyclodiphosphate (ME-2,4cPP) into 1-hydroxy-2-methyl-2-(E)-butenyl 4-diphosphate. The polypeptide is 4-hydroxy-3-methylbut-2-en-1-yl diphosphate synthase (flavodoxin) (Chlamydia caviae (strain ATCC VR-813 / DSM 19441 / 03DC25 / GPIC) (Chlamydophila caviae)).